The primary structure comprises 469 residues: UDP-N-acetylmuramate--L-alanine ligase (469 aa).

113 to 119 lines the ATP pocket; it reads GTHGKTT.

It belongs to the MurCDEF family.

The protein localises to the cytoplasm. The enzyme catalyses UDP-N-acetyl-alpha-D-muramate + L-alanine + ATP = UDP-N-acetyl-alpha-D-muramoyl-L-alanine + ADP + phosphate + H(+). It participates in cell wall biogenesis; peptidoglycan biosynthesis. Cell wall formation. In Neisseria meningitidis serogroup C / serotype 2a (strain ATCC 700532 / DSM 15464 / FAM18), this protein is UDP-N-acetylmuramate--L-alanine ligase.